The primary structure comprises 360 residues: Ribosomal RNA large subunit methyltransferase M (360 aa).

Residues Ser190, 223–226 (CPGG), Asp242, Asp262, and Asp280 each bind S-adenosyl-L-methionine. Lys309 acts as the Proton acceptor in catalysis.

The protein belongs to the class I-like SAM-binding methyltransferase superfamily. RNA methyltransferase RlmE family. RlmM subfamily. In terms of assembly, monomer.

The protein resides in the cytoplasm. The enzyme catalyses cytidine(2498) in 23S rRNA + S-adenosyl-L-methionine = 2'-O-methylcytidine(2498) in 23S rRNA + S-adenosyl-L-homocysteine + H(+). In terms of biological role, catalyzes the 2'-O-methylation at nucleotide C2498 in 23S rRNA. The chain is Ribosomal RNA large subunit methyltransferase M from Haemophilus ducreyi (strain 35000HP / ATCC 700724).